A 108-amino-acid polypeptide reads, in one-letter code: UPF0102 protein Sama_3355 (108 aa).

Belongs to the UPF0102 family.

This Shewanella amazonensis (strain ATCC BAA-1098 / SB2B) protein is UPF0102 protein Sama_3355.